The sequence spans 337 residues: Protein SphX (337 aa).

The first 30 residues, 1–30 (MTTLKPALRRAAVLLPIAAVASSLFPIQEA), serve as a signal peptide directing secretion.

It belongs to the PstS family. In terms of processing, the N-terminus is blocked.

It localises to the cell inner membrane. In terms of biological role, may be involved in the system for phosphate transport across the cytoplasmic membrane. This Synechococcus elongatus (strain ATCC 33912 / PCC 7942 / FACHB-805) (Anacystis nidulans R2) protein is Protein SphX (sphX).